Reading from the N-terminus, the 276-residue chain is Cruxhalorhodopsin-3 (276 aa).

A propeptide spanning residues 1–21 is cleaved from the precursor; sequence MPAASTAATTLLQASQSEVLG. Over 22–25 the chain is Extracellular; that stretch reads EIQS. A helical membrane pass occupies residues 26–51; the sequence is NFLLNSSLWVNIALAGVVILLFVAMG. The Cytoplasmic portion of the chain corresponds to 52 to 57; sequence RELESS. A helical membrane pass occupies residues 58–81; it reads RAKLIWVATMLVPLVSISSYAGLA. Residues 82–105 are Extracellular-facing; that stretch reads SGLTVGFLQMPPGHALAGQEVLSP. The helical transmembrane segment at 106-127 threads the bilayer; it reads WGRYLTWTFSTPMILLALGLLA. Topologically, residues 128-130 are cytoplasmic; that stretch reads DTD. The helical transmembrane segment at 131-154 threads the bilayer; that stretch reads MASLFTAITMDIGMCITGLAAALV. Topologically, residues 155-157 are extracellular; sequence TSS. A helical transmembrane segment spans residues 158–180; the sequence is HLLRWVFYGISCAFFIAVLYVLL. Residues 181–192 are Cytoplasmic-facing; sequence VEWPADAEAAGT. Residues 193–216 traverse the membrane as a helical segment; the sequence is SEIFGTLKLLTVVLWLGYPILWAL. Residues 217 to 225 are Extracellular-facing; it reads GSEGVALLS. Residues 226 to 254 form a helical membrane-spanning segment; sequence VGVTSWGYSGLDILAKYVFAFLLLRWVAA. N6-(retinylidene)lysine is present on K241. At 255–276 the chain is on the cytoplasmic side; the sequence is NEDTVTQAGMSLGSGGAAPADD.

It belongs to the archaeal/bacterial/fungal opsin family.

The protein resides in the cell membrane. Its function is as follows. Light-driven chloride pump. This chain is Cruxhalorhodopsin-3 (choP3), found in Haloarcula vallismortis (Halobacterium vallismortis).